We begin with the raw amino-acid sequence, 359 residues long: F-box protein At5g49610 (359 aa).

Positions 3 to 52 (NQKGALFPDEVILQILARLPVKSLFRFKSVCKSWYRLPSDKYFTSLFNQL) constitute an F-box domain.

In terms of assembly, part of a SCF (SKP1-cullin-F-box) protein ligase complex. Interacts with SKP1A, SKP1B, ASK11, ASK12, ASK13 and ASK14.

The protein operates within protein modification; protein ubiquitination. The sequence is that of F-box protein At5g49610 from Arabidopsis thaliana (Mouse-ear cress).